The following is a 284-amino-acid chain: Bifunctional protein FolD (284 aa).

NADP(+) contacts are provided by residues 166 to 168 (GAS) and Ile232.

The protein belongs to the tetrahydrofolate dehydrogenase/cyclohydrolase family. As to quaternary structure, homodimer.

The catalysed reaction is (6R)-5,10-methylene-5,6,7,8-tetrahydrofolate + NADP(+) = (6R)-5,10-methenyltetrahydrofolate + NADPH. It carries out the reaction (6R)-5,10-methenyltetrahydrofolate + H2O = (6R)-10-formyltetrahydrofolate + H(+). It functions in the pathway one-carbon metabolism; tetrahydrofolate interconversion. Its function is as follows. Catalyzes the oxidation of 5,10-methylenetetrahydrofolate to 5,10-methenyltetrahydrofolate and then the hydrolysis of 5,10-methenyltetrahydrofolate to 10-formyltetrahydrofolate. The protein is Bifunctional protein FolD of Shewanella sp. (strain MR-7).